We begin with the raw amino-acid sequence, 771 residues long: DNA polymerase 1 (771 aa).

This sequence belongs to the DNA polymerase type-B family.

The catalysed reaction is DNA(n) + a 2'-deoxyribonucleoside 5'-triphosphate = DNA(n+1) + diphosphate. The chain is DNA polymerase 1 (polI) from Pyrococcus abyssi (strain GE5 / Orsay).